Consider the following 146-residue polypeptide: 3-dehydroquinate dehydratase (146 aa).

Tyr23 acts as the Proton acceptor in catalysis. Residues Asn74, His80, and Asp87 each contribute to the substrate site. His100 serves as the catalytic Proton donor. Substrate is bound by residues 101 to 102 and Arg111; that span reads IS.

It belongs to the type-II 3-dehydroquinase family. As to quaternary structure, homododecamer.

It catalyses the reaction 3-dehydroquinate = 3-dehydroshikimate + H2O. It functions in the pathway metabolic intermediate biosynthesis; chorismate biosynthesis; chorismate from D-erythrose 4-phosphate and phosphoenolpyruvate: step 3/7. Its function is as follows. Catalyzes a trans-dehydration via an enolate intermediate. The protein is 3-dehydroquinate dehydratase of Bacillus cytotoxicus (strain DSM 22905 / CIP 110041 / 391-98 / NVH 391-98).